A 190-amino-acid chain; its full sequence is Peptidyl-prolyl cis-trans isomerase A (190 aa).

The N-terminal stretch at 1 to 24 (MFKSTLAAMAAVFALSALSPAAMA) is a signal peptide. Residues 27-188 (GDPHVLLTTS…KPVVILSAKV (162 aa)) form the PPIase cyclophilin-type domain.

This sequence belongs to the cyclophilin-type PPIase family.

It localises to the periplasm. It catalyses the reaction [protein]-peptidylproline (omega=180) = [protein]-peptidylproline (omega=0). Its function is as follows. PPIases accelerate the folding of proteins. It catalyzes the cis-trans isomerization of proline imidic peptide bonds in oligopeptides. The polypeptide is Peptidyl-prolyl cis-trans isomerase A (ppiA) (Escherichia coli O157:H7).